We begin with the raw amino-acid sequence, 390 residues long: Chorismate synthase 1 (390 aa).

Positions 39 and 45 each coordinate NADP(+). FMN is bound by residues 132–134, 253–254, Gly-298, 313–317, and Arg-339; these read RSS, NA, and KPIPT.

Belongs to the chorismate synthase family. In terms of assembly, homotetramer. It depends on FMNH2 as a cofactor.

The catalysed reaction is 5-O-(1-carboxyvinyl)-3-phosphoshikimate = chorismate + phosphate. It functions in the pathway metabolic intermediate biosynthesis; chorismate biosynthesis; chorismate from D-erythrose 4-phosphate and phosphoenolpyruvate: step 7/7. Functionally, catalyzes the anti-1,4-elimination of the C-3 phosphate and the C-6 proR hydrogen from 5-enolpyruvylshikimate-3-phosphate (EPSP) to yield chorismate, which is the branch point compound that serves as the starting substrate for the three terminal pathways of aromatic amino acid biosynthesis. This reaction introduces a second double bond into the aromatic ring system. The protein is Chorismate synthase 1 of Bacillus anthracis.